The chain runs to 705 residues: Dynein axonemal intermediate chain 1 (705 aa).

2 disordered regions span residues 1 to 44 (MPSK…AVRP) and 122 to 169 (AGSQ…DVPA). Phosphoserine is present on residues Ser-124 and Ser-127. Residues 124-135 (SQESVKVVTSDT) are compositionally biased toward polar residues. The span at 136 to 159 (EILEEEEEPKEGEGEGEGEAEGEA) shows a compositional bias: acidic residues. 5 WD repeats span residues 386-426 (SSES…SQPC), 435-478 (KHTD…LVHI), 543-583 (AHNM…PMFI), 585-625 (DLNA…YEAI), and 633-672 (KKKNKITHVQFNPIHPIIIVGDDRGHITCLKLSPNLRKMP).

It belongs to the dynein intermediate chain family. In terms of assembly, consists of at least two heavy chains and a number of intermediate and light chains. Interacts with BICD2. Interacts with CFAP45 and CFAP52. Interacts with CFAP53.

The protein localises to the cytoplasm. It is found in the cytoskeleton. Its subcellular location is the cilium axoneme. Its function is as follows. Part of the dynein complex of respiratory cilia. This chain is Dynein axonemal intermediate chain 1 (Dnai1), found in Rattus norvegicus (Rat).